Here is a 185-residue protein sequence, read N- to C-terminus: UPF0200 protein TON_1344 (185 aa).

Residue 7 to 14 (GMPGSGKS) coordinates ATP.

It belongs to the UPF0200 family.

This is UPF0200 protein TON_1344 from Thermococcus onnurineus (strain NA1).